Here is a 289-residue protein sequence, read N- to C-terminus: ATP synthase subunit gamma, mitochondrial (289 aa).

This sequence belongs to the ATPase gamma chain family. F-type ATPases have 2 components, CF(1) - the catalytic core - and CF(0) - the membrane proton channel. CF(1) has five subunits: alpha(3), beta(3), gamma(1), delta(1), epsilon(1). CF(0) has three main subunits: a, b and c.

It is found in the mitochondrion. The protein localises to the mitochondrion inner membrane. Mitochondrial membrane ATP synthase (F(1)F(0) ATP synthase or Complex V) produces ATP from ADP in the presence of a proton gradient across the membrane which is generated by electron transport complexes of the respiratory chain. F-type ATPases consist of two structural domains, F(1) - containing the extramembraneous catalytic core, and F(0) - containing the membrane proton channel, linked together by a central stalk and a peripheral stalk. During catalysis, ATP synthesis in the catalytic domain of F(1) is coupled via a rotary mechanism of the central stalk subunits to proton translocation. Part of the complex F(1) domain and the central stalk which is part of the complex rotary element. The gamma subunit protrudes into the catalytic domain formed of alpha(3)beta(3). Rotation of the central stalk against the surrounding alpha(3)beta(3) subunits leads to hydrolysis of ATP in three separate catalytic sites on the beta subunits. The polypeptide is ATP synthase subunit gamma, mitochondrial (ATP3) (Kluyveromyces lactis (strain ATCC 8585 / CBS 2359 / DSM 70799 / NBRC 1267 / NRRL Y-1140 / WM37) (Yeast)).